The chain runs to 359 residues: DNA replication and repair protein RecF (359 aa).

30–37 (GPNGSGKT) is a binding site for ATP.

This sequence belongs to the RecF family.

The protein resides in the cytoplasm. Its function is as follows. The RecF protein is involved in DNA metabolism; it is required for DNA replication and normal SOS inducibility. RecF binds preferentially to single-stranded, linear DNA. It also seems to bind ATP. The protein is DNA replication and repair protein RecF of Aliivibrio fischeri (strain ATCC 700601 / ES114) (Vibrio fischeri).